The following is a 635-amino-acid chain: Threonine--tRNA ligase (635 aa).

The region spanning 1 to 61 (MIAITLPDGS…DRDVALAIIT (61 aa)) is the TGS domain. Residues 242–533 (DHRKLGKSLD…LLENHAGALP (292 aa)) form a catalytic region. Zn(2+) is bound by residues Cys-333, His-384, and His-510.

Belongs to the class-II aminoacyl-tRNA synthetase family. As to quaternary structure, homodimer. The cofactor is Zn(2+).

Its subcellular location is the cytoplasm. The catalysed reaction is tRNA(Thr) + L-threonine + ATP = L-threonyl-tRNA(Thr) + AMP + diphosphate + H(+). Catalyzes the attachment of threonine to tRNA(Thr) in a two-step reaction: L-threonine is first activated by ATP to form Thr-AMP and then transferred to the acceptor end of tRNA(Thr). Also edits incorrectly charged L-seryl-tRNA(Thr). This chain is Threonine--tRNA ligase, found in Cupriavidus pinatubonensis (strain JMP 134 / LMG 1197) (Cupriavidus necator (strain JMP 134)).